Reading from the N-terminus, the 139-residue chain is D-ribose pyranase (139 aa).

His20 acts as the Proton donor in catalysis. Residues Asp28, His106, and 128-130 each bind substrate; that span reads YAN.

It belongs to the RbsD / FucU family. RbsD subfamily. Homodecamer.

The protein resides in the cytoplasm. The catalysed reaction is beta-D-ribopyranose = beta-D-ribofuranose. It functions in the pathway carbohydrate metabolism; D-ribose degradation; D-ribose 5-phosphate from beta-D-ribopyranose: step 1/2. Functionally, catalyzes the interconversion of beta-pyran and beta-furan forms of D-ribose. In Salmonella paratyphi B (strain ATCC BAA-1250 / SPB7), this protein is D-ribose pyranase.